Reading from the N-terminus, the 38-residue chain is Potassium channel toxin alpha-KTx 2.21 (38 aa).

Intrachain disulfides connect cysteine 7/cysteine 29, cysteine 13/cysteine 34, and cysteine 17/cysteine 36.

Expressed by the venom gland.

It is found in the secreted. Inhibits human voltage-gated potassium (Kv) channels Kv1.2/KCNA2 and Kv1.3/KCNA3. Does not block human Kv1.1/KCNA1 at 100nM concentration. This chain is Potassium channel toxin alpha-KTx 2.21, found in Centruroides bonito (Scorpion).